Consider the following 208-residue polypeptide: MANNTRARRQARLSRSLGIALTPKAAKYMERRPYGPGEHGRARKKQDSDYAVRLREKQRLRAQYGIREAQMTRAFEEARRTKGLTGENLIELLEMRLDALVLRAGFARTIAQARQLVVHRHILVDGIRVDRPSFRVGEGQLVHVHSRSETMVPLQVAAAGAHRDVLPAVPAYLDVKLEALQARLVRRPKRSEIPVTCEEQLVVEFYAR.

One can recognise an S4 RNA-binding domain in the interval 95-161; it reads MRLDALVLRA…VPLQVAAAGA (67 aa).

The protein belongs to the universal ribosomal protein uS4 family. Part of the 30S ribosomal subunit. Contacts protein S5. The interaction surface between S4 and S5 is involved in control of translational fidelity.

Its function is as follows. One of the primary rRNA binding proteins, it binds directly to 16S rRNA where it nucleates assembly of the body of the 30S subunit. With S5 and S12 plays an important role in translational accuracy. In Pseudarthrobacter chlorophenolicus (strain ATCC 700700 / DSM 12829 / CIP 107037 / JCM 12360 / KCTC 9906 / NCIMB 13794 / A6) (Arthrobacter chlorophenolicus), this protein is Small ribosomal subunit protein uS4.